A 95-amino-acid chain; its full sequence is Integration host factor subunit beta (95 aa).

Belongs to the bacterial histone-like protein family. Heterodimer of an alpha and a beta chain.

This protein is one of the two subunits of integration host factor, a specific DNA-binding protein that functions in genetic recombination as well as in transcriptional and translational control. This Ruegeria sp. (strain TM1040) (Silicibacter sp.) protein is Integration host factor subunit beta.